The chain runs to 778 residues: Receptor like protein 28 (778 aa).

The first 24 residues, 1–24 (MSGSHLRLRFLSLLLLCCVSSSTS), serve as a signal peptide directing secretion. At 25-739 (SLFTFSYPVL…EEQEQVLNWK (715 aa)) the chain is on the extracellular side. 8 N-linked (GlcNAc...) asparagine glycosylation sites follow: Asn-60, Asn-72, Asn-93, Asn-106, Asn-111, Asn-147, Asn-170, and Asn-173. LRR repeat units lie at residues 99-123 (FHQL…EFGN), 125-147 (NKVE…SFSN), 148-171 (LSQL…VQNL), 172-195 (TNLS…LLMM), and 197-219 (FLSY…TSSK). One copy of the LRR 6; degenerate repeat lies at 220–240 (LEILYLGLKPFEGQILEPISK). LRR repeat units follow at residues 241–265 (LINL…LFSS), 266–291 (LKSL…LYIP), 293–313 (TLEK…ILKT), 314–338 (LQKL…LWRL), 340–363 (RLRS…VLVN), and 364–387 (SSME…PLSI). An N-linked (GlcNAc...) asparagine glycan is attached at Asn-253. 2 N-linked (GlcNAc...) asparagine glycosylation sites follow: Asn-348 and Asn-363. The LRR 13; degenerate repeat unit spans residues 388–407 (KAFSAGYNNFSGEIPLSICN). 5 N-linked (GlcNAc...) asparagine glycosylation sites follow: Asn-396, Asn-407, Asn-420, Asn-431, and Asn-476. LRR repeat units lie at residues 408 to 429 (RSSL…PQCL), 430 to 453 (SNLT…LCAG), 455 to 477 (SLQT…LLNC), 479 to 500 (SLEF…WLKA), 501 to 525 (LPNL…HQSP), 528 to 552 (FPEL…YFVN), 601 to 625 (LNSY…IGLL), 626 to 649 (KELI…LANA), 650 to 673 (TELE…LKTL), and 678 to 700 (YINV…SSFE). N-linked (GlcNAc...) asparagine glycans are attached at residues Asn-632 and Asn-648. N-linked (GlcNAc...) asparagine glycosylation occurs at Asn-680. A helical transmembrane segment spans residues 740–760 (AVATGYGTGLLLGLAIAQVIA). At 761-778 (SYKPDWLVKIIGLFRFCF) the chain is on the cytoplasmic side.

Belongs to the RLP family.

Its subcellular location is the cell membrane. This chain is Receptor like protein 28, found in Arabidopsis thaliana (Mouse-ear cress).